The chain runs to 680 residues: Forkhead box protein P4 (680 aa).

A compositionally biased stretch (polar residues) spans 1-17 (MMVESASETIRSAPSGQ). Residues 1 to 56 (MMVESASETIRSAPSGQNGVGSLSGQADGSSGGATGTTASGTGREVTTGADSNGEM) are disordered. A phosphoserine mark is found at Ser-52 and Ser-86. Glycyl lysine isopeptide (Lys-Gly) (interchain with G-Cter in SUMO2) cross-links involve residues Lys-175 and Lys-246. The tract at residues 262–306 (FAAPPKVSPPLSHHTLPNGQPTVLTSRRDSSSHEETPGSHPLYGH) is disordered. Residues 276-286 (TLPNGQPTVLT) show a composition bias toward polar residues. The span at 287-298 (SRRDSSSHEETP) shows a compositional bias: basic and acidic residues. The segment at 307–332 (GECKWPGCETLCEDLGQFIKHLNTEH) adopts a C2H2-type zinc-finger fold. The segment at 349–370 (VQQLEIQLAKESERLQAMMAHL) is leucine-zipper. Residue Lys-378 forms a Glycyl lysine isopeptide (Lys-Gly) (interchain with G-Cter in SUMO2) linkage. Residues 407–445 (GLVHPPTSAAAPVTPLRPPGLGSASLHGGGPARRRSSDK) are disordered. Positions 467–559 (RPPFTYASLI…KMTGSPTLVK (93 aa)) form a DNA-binding region, fork-head. Phosphoserine is present on Ser-554. A disordered region spans residues 602–680 (PLSHDDVGAP…EEELPGEELS (79 aa)). Residues 617-635 (SNGSSSPPRLSPPQYSHQV) show a composition bias toward polar residues. Positions 668–680 (RDLEEELPGEELS) are enriched in acidic residues.

Forms homodimers and heterodimers with FOXP1 and FOXP2. Dimerization is required for DNA-binding.

It is found in the nucleus. Functionally, transcriptional repressor that represses lung-specific expression. In Homo sapiens (Human), this protein is Forkhead box protein P4 (FOXP4).